A 492-amino-acid chain; its full sequence is N-succinylglutamate 5-semialdehyde dehydrogenase (492 aa).

NAD(+) is bound at residue 220–225; that stretch reads GSANTG. Residues glutamate 243 and cysteine 277 contribute to the active site.

It belongs to the aldehyde dehydrogenase family. AstD subfamily.

The catalysed reaction is N-succinyl-L-glutamate 5-semialdehyde + NAD(+) + H2O = N-succinyl-L-glutamate + NADH + 2 H(+). The protein operates within amino-acid degradation; L-arginine degradation via AST pathway; L-glutamate and succinate from L-arginine: step 4/5. In terms of biological role, catalyzes the NAD-dependent reduction of succinylglutamate semialdehyde into succinylglutamate. In Escherichia coli (strain UTI89 / UPEC), this protein is N-succinylglutamate 5-semialdehyde dehydrogenase.